The primary structure comprises 214 residues: 3-isopropylmalate dehydratase small subunit (214 aa).

The protein belongs to the LeuD family. LeuD type 1 subfamily. Heterodimer of LeuC and LeuD.

The catalysed reaction is (2R,3S)-3-isopropylmalate = (2S)-2-isopropylmalate. Its pathway is amino-acid biosynthesis; L-leucine biosynthesis; L-leucine from 3-methyl-2-oxobutanoate: step 2/4. In terms of biological role, catalyzes the isomerization between 2-isopropylmalate and 3-isopropylmalate, via the formation of 2-isopropylmaleate. In Desulforapulum autotrophicum (strain ATCC 43914 / DSM 3382 / VKM B-1955 / HRM2) (Desulfobacterium autotrophicum), this protein is 3-isopropylmalate dehydratase small subunit.